Reading from the N-terminus, the 464-residue chain is Fumarate hydratase class II (464 aa).

Substrate is bound by residues 98–100 (SGT), 129–132 (HPND), 139–141 (SSN), and Thr-187. Catalysis depends on His-188, which acts as the Proton donor/acceptor. The active site involves Ser-318. Substrate contacts are provided by residues Ser-319 and 324–326 (KVN).

It belongs to the class-II fumarase/aspartase family. Fumarase subfamily. In terms of assembly, homotetramer.

The protein localises to the cytoplasm. It carries out the reaction (S)-malate = fumarate + H2O. The protein operates within carbohydrate metabolism; tricarboxylic acid cycle; (S)-malate from fumarate: step 1/1. Its function is as follows. Involved in the TCA cycle. Catalyzes the stereospecific interconversion of fumarate to L-malate. This is Fumarate hydratase class II from Pasteurella multocida (strain Pm70).